Here is a 980-residue protein sequence, read N- to C-terminus: MSSGCRSVGGSTWGNWRGDGGDLRQRRVLSPVCSAPAAGSWIGSQLGNVGNLLATPHPLGKPASSRVGTIVLACLLLFGSCVVRAVPTTPSPPTSTPTSMSTHSHGTVDPTLLPTETPDPLRLAVRESGILAEDGDFYTCPPPTGSTVVRIEPPRTCPKFDLGRNFTEGIAVIFKENIAPYKFRANVYYKDIVVTRVWKGYSHTSLSDRYNDRVPVSVEEIFGLIDSKGKCSSKAEYLRDNIMHHAYHDDEDEVELDLCRPSLQLRGARAWQTTNDTTSYVGWMPWRHYTSTSVNCIVEEVEARSVYPYDSFALSTGDIVYASPFYGLRAAARIEHNSYAQERFRQVEGYRPRDLDSKLQAEEPVTKNFITTPHVTVSWNWTEKKVEACTLTKWKEVDELVRDEFRGSYRFTIRSISSTFISNTTQFKLESAPLTECVSKEAKEAIDSIYKKQYESTHVFSGDVEYYLARGGFLIAFRPMLSNELARLYLNELVRSNRTYDLKNLLNPNANNNNNTTRRRRSLLSVPEPQPTQDGVHREQILHRLHKRAVEATAGTDSSNVTAKQLELIKTTSSIEFAMLQFAYDHIQSHVNEMLSRIATAWCTLQNKERTLWNEMVKINPSAIVSATLDERVAARVLGDVIAITHCAKIEGNVYLQNSMRSMDSNTCYSRPPVTFTITKNANNRGSIEGQLGEENEIFTERKLIEPCALNQKRYFKFGKEYVYYENYTFVRKVPPTEIEVISTYVELNLTLLEDREFLPLEVYTRAELEDTGLLDYSEIQRRNQLHALRFYDIDSVVNVDNTAVIMQGIASFFKGLGKVGEAVGTLVLGAAGAVVSTVSGIASFLNNPFGGLAIGLLVIAGLVAAFFAYRYVMQIRSNPMKALYPITTKALKNKAKTSYGQNEEDDGSDFDEAKLEEAREMIKYMSMVSALEKQEKKAIKKNSGVGLIASNVSKLALRRRGPKYTRLQQNDTMENEKMV.

A compositionally biased stretch (polar residues) spans 1–14 (MSSGCRSVGGSTWG). Disordered stretches follow at residues 1-20 (MSSGCRSVGGSTWGNWRGDG) and 88-118 (TTPSPPTSTPTSMSTHSHGTVDPTLLPTETP). A signal peptide spans 1–86 (MSSGCRSVGG…LFGSCVVRAV (86 aa)). Over 87–849 (PTTPSPPTST…SGIASFLNNP (763 aa)) the chain is Virion surface. The segment covering 96–118 (TPTSMSTHSHGTVDPTLLPTETP) has biased composition (low complexity). Intrachain disulfides connect C140/C647, C157/C603, C231/C296, C389/C437, and C668/C708. A glycan (N-linked (GlcNAc...) asparagine; by host) is linked at N165. Positions 197-203 (VWKGYSH) are involved in fusion and/or binding to host membrane. Residue N275 is glycosylated (N-linked (GlcNAc...) asparagine; by host). Positions 282–290 (GWMPWRHYT) are involved in fusion and/or binding to host membrane. 6 N-linked (GlcNAc...) asparagine; by host glycosylation sites follow: N380, N423, N497, N514, N515, and N560. Positions 505 to 516 (LLNPNANNNNNT) are enriched in low complexity. The tract at residues 505 to 535 (LLNPNANNNNNTTRRRRSLLSVPEPQPTQDG) is disordered. 2 N-linked (GlcNAc...) asparagine; by host glycosylation sites follow: N727 and N749. Hydrophobic membrane proximal region regions lie at residues 794-847 (IDSV…SFLN) and 823-843 (AVGTLVLGAAGAVVSTVSGIA). The chain crosses the membrane as a helical span at residues 850–870 (FGGLAIGLLVIAGLVAAFFAY). Over 871-980 (RYVMQIRSNP…NDTMENEKMV (110 aa)) the chain is Intravirion. The short motif at 925-928 (YMSM) is the Golgi targeting element. N952 carries an N-linked (GlcNAc...) asparagine; by host glycan. An Internalization motif motif is present at residues 965-968 (YTRL). N-linked (GlcNAc...) asparagine; by host glycosylation occurs at N971.

Belongs to the herpesviridae glycoprotein B family. As to quaternary structure, homotrimer; disulfide-linked. Binds to heparan sulfate proteoglycans. Interacts with gH/gL heterodimer. Post-translationally, a proteolytic cleavage by host furin generates two subunits that remain linked by disulfide bonds.

It localises to the virion membrane. The protein resides in the host cell membrane. The protein localises to the host endosome membrane. It is found in the host Golgi apparatus membrane. In terms of biological role, envelope glycoprotein that forms spikes at the surface of virion envelope. Essential for the initial attachment to heparan sulfate moieties of the host cell surface proteoglycans. Involved in fusion of viral and cellular membranes leading to virus entry into the host cell. Following initial binding to its host receptors, membrane fusion is mediated by the fusion machinery composed at least of gB and the heterodimer gH/gL. May be involved in the fusion between the virion envelope and the outer nuclear membrane during virion egress. The sequence is that of Envelope glycoprotein B from Equine herpesvirus 1 (strain HVS25A) (EHV-1).